We begin with the raw amino-acid sequence, 282 residues long: Large ribosomal subunit protein uL2 (282 aa).

2 disordered regions span residues 31 to 55 (KRLT…RHIG) and 223 to 282 (LAMN…NTQR). 2 stretches are compositionally biased toward basic residues: residues 34-55 (TKPV…RHIG) and 270-282 (VTRR…NTQR).

It belongs to the universal ribosomal protein uL2 family. Part of the 50S ribosomal subunit. Forms a bridge to the 30S subunit in the 70S ribosome.

One of the primary rRNA binding proteins. Required for association of the 30S and 50S subunits to form the 70S ribosome, for tRNA binding and peptide bond formation. It has been suggested to have peptidyltransferase activity; this is somewhat controversial. Makes several contacts with the 16S rRNA in the 70S ribosome. This is Large ribosomal subunit protein uL2 from Anaeromyxobacter dehalogenans (strain 2CP-C).